Here is a 678-residue protein sequence, read N- to C-terminus: Translation initiation factor eIF2B subunit epsilon (678 aa).

Thr-172 is subject to Phosphothreonine. Positions 467–489 are disordered; it reads STNELHLSDSESSETSSSSEEDM. Ser-500 carries the phosphoserine modification. Thr-503 is subject to Phosphothreonine. The residue at position 506 (Ser-506) is a Phosphoserine. A W2 domain is found at 508-674; it reads DFDEGDFNKE…NTAESESESE (167 aa).

This sequence belongs to the eIF-2B gamma/epsilon subunits family. Component of the translation initiation factor 2B (eIF2B) complex which is a heterodecamer of two sets of five different subunits: alpha, beta, gamma, delta and epsilon. Subunits alpha, beta and delta comprise a regulatory subcomplex and subunits epsilon and gamma comprise a catalytic subcomplex. Within the complex, the hexameric regulatory complex resides at the center, with the two heterodimeric catalytic subcomplexes bound on opposite sides.

The protein resides in the cytoplasm. The protein localises to the cytosol. Its function is as follows. Acts as a component of the translation initiation factor 2B (eIF2B) complex, which catalyzes the exchange of GDP for GTP on the eukaryotic initiation factor 2 (eIF2) complex gamma subunit. Its guanine nucleotide exchange factor activity is repressed when bound to eIF2 complex phosphorylated on the alpha subunit, thereby limiting the amount of methionyl-initiator methionine tRNA available to the ribosome and consequently global translation is repressed. This chain is Translation initiation factor eIF2B subunit epsilon (tif225), found in Schizosaccharomyces pombe (strain 972 / ATCC 24843) (Fission yeast).